The sequence spans 487 residues: b(0,+)-type amino acid transporter 1 (487 aa).

Residues Met-1–Ser-15 show a composition bias toward basic and acidic residues. Residues Met-1–Lys-22 form a disordered region. Residues Met-1–Gly-31 lie on the Cytoplasmic side of the membrane. At Ser-18 the chain carries Phosphoserine. The helical transmembrane segment at Leu-32–Val-55 threads the bilayer. Ile-43–Gly-47 is an L-arginine binding site. Over Leu-56–Val-62 the chain is Extracellular. Residues Gly-63–Ala-84 form a helical membrane-spanning segment. Residues Glu-85–Tyr-110 are Cytoplasmic-facing. The helical transmembrane segment at Leu-111 to Cys-137 threads the bilayer. Over Ala-138–Pro-147 the chain is Extracellular. Helical transmembrane passes span Gln-148–Ser-169 and Val-170–Ile-193. Topologically, residues Ser-194–Ser-217 are extracellular. Residues Val-218 to Leu-238 form a helical membrane-spanning segment. Asp-233 contributes to the L-arginine binding site. Residues Asn-239–Asn-251 are Cytoplasmic-facing. Residues Leu-252–Tyr-274 form a helical membrane-spanning segment. At Phe-275–Ser-302 the chain is on the extracellular side. Residues Trp-303 to Gly-325 form a helical membrane-spanning segment. Residues Arg-326–Pro-351 lie on the Cytoplasmic side of the membrane. 2 helical membrane passes run Ala-352 to Asp-370 and Ile-371 to Leu-391. The Cytoplasmic portion of the chain corresponds to Gly-392–Pro-410. A helical transmembrane segment spans residues Val-411–Ser-431. Over Lys-432–Thr-434 the chain is Extracellular. Residues Trp-435 to Phe-450 form a helical membrane-spanning segment. The Cytoplasmic portion of the chain corresponds to Tyr-451–Glu-487.

This sequence belongs to the amino acid-polyamine-organocation (APC) superfamily. As to quaternary structure, disulfide-linked heterodimer composed of the catalytic light chain subunit SLC7A9 and the heavy chain subunit SLC3A1. The heterodimer is the minimal functional unit. Assembles in heterotetramers (dimers of heterodimers) and higher order oligomers; the oligomerization is mediated by SLC3A1 likely to prevent degradation and facilitate heteromer trafficking to the plasma membrane. Interacts with CAV1. In terms of tissue distribution, expressed in the brush border membrane in the kidney (at protein level). Kidney, small intestine, liver and placenta.

It localises to the apical cell membrane. It is found in the cell membrane. The enzyme catalyses L-leucine(out) + L-arginine(in) = L-leucine(in) + L-arginine(out). It catalyses the reaction L-histidine(out) + L-arginine(in) = L-histidine(in) + L-arginine(out). The catalysed reaction is L-arginine(in) + L-phenylalanine(out) = L-arginine(out) + L-phenylalanine(in). It carries out the reaction L-cysteine(out) + L-arginine(in) = L-cysteine(in) + L-arginine(out). The enzyme catalyses L-cystine(out) + L-arginine(in) = L-cystine(in) + L-arginine(out). It catalyses the reaction L-lysine(out) + L-arginine(in) = L-lysine(in) + L-arginine(out). In terms of biological role, associates with SLC3A1 to form a functional transporter complex that mediates the electrogenic exchange between cationic amino acids and neutral amino acids, with a stoichiometry of 1:1. Has system b(0,+)-like activity with high affinity for extracellular cationic amino acids and L-cystine and lower affinity for intracellular neutral amino acids. Substrate exchange is driven by high concentration of intracellular neutral amino acids and the intracellular reduction of L-cystine to L-cysteine. Required for reabsorption of L-cystine and dibasic amino acids across the brush border membrane in renal proximal tubules. This is b(0,+)-type amino acid transporter 1 from Homo sapiens (Human).